We begin with the raw amino-acid sequence, 201 residues long: 3-isopropylmalate dehydratase small subunit (201 aa).

The protein belongs to the LeuD family. LeuD type 1 subfamily. Heterodimer of LeuC and LeuD.

The enzyme catalyses (2R,3S)-3-isopropylmalate = (2S)-2-isopropylmalate. It participates in amino-acid biosynthesis; L-leucine biosynthesis; L-leucine from 3-methyl-2-oxobutanoate: step 2/4. Catalyzes the isomerization between 2-isopropylmalate and 3-isopropylmalate, via the formation of 2-isopropylmaleate. The sequence is that of 3-isopropylmalate dehydratase small subunit from Brucella anthropi (strain ATCC 49188 / DSM 6882 / CCUG 24695 / JCM 21032 / LMG 3331 / NBRC 15819 / NCTC 12168 / Alc 37) (Ochrobactrum anthropi).